Here is a 536-residue protein sequence, read N- to C-terminus: SNW domain-containing protein 1 (536 aa).

The segment at 1 to 44 (MALTSFLPAPTQLSQDQLEAEERARSQRSLQTSLVSSRREPPPY) is disordered. Residue A2 is modified to N-acetylalanine. Position 14 is a phosphoserine (S14). Polar residues predominate over residues 27–36 (QRSLQTSLVS). Residues 59-79 (GDGGAFPEIHVAQYPLDMGRK) are interaction with PPIL1. Glycyl lysine isopeptide (Lys-Gly) (interchain with G-Cter in SUMO2) cross-links involve residues K81, K97, K115, K122, K141, K158, and K170. Residues 174–339 (AQYIRYTPSQ…KARERRAGIK (166 aa)) form an SNW region. A phosphoserine mark is found at S182 and S190. A Glycyl lysine isopeptide (Lys-Gly) (interchain with G-Cter in SUMO2) cross-link involves residue K193. Residues 212-233 (FKINKKIPRGPPSPPAPVMHSP) are disordered. Phosphoserine is present on residues S224, S232, and S234. Glycyl lysine isopeptide (Lys-Gly) (interchain with G-Cter in SUMO2) cross-links involve residues K240, K258, K286, K339, K344, K416, and K441. A disordered region spans residues 311–386 (KMAQKEKEKH…RSKLQRNENR (76 aa)). At S446 the chain carries Phosphoserine. Residue K452 forms a Glycyl lysine isopeptide (Lys-Gly) (interchain with G-Cter in SUMO2) linkage. 2 stretches are compositionally biased toward basic and acidic residues: residues 467–489 (IKTN…RGRE) and 503–530 (KFLE…EHEG). The tract at residues 467–536 (IKTNRFVPDK…EHEGKKRRKE (70 aa)) is disordered. 2 positions are modified to phosphoserine: S479 and S481. Residue K509 forms a Glycyl lysine isopeptide (Lys-Gly) (interchain with G-Cter in SUMO2) linkage.

This sequence belongs to the SNW family. Identified in the spliceosome C complex. Associates with U4/U6-U5 tri-small nuclear ribonucleoproteins (U4/U6-U5 tri-snRNPs). Component of the minor spliceosome, which splices U12-type introns. Interacts with SKI, SMAD2,SMAD3, RBPJ, RB1, PABPN1, MAGEA1, SIRT1, FOXN3, U2AF2, PPIL1, DAXX and ATP1B4. Interacts with VDR and RXRA; preferentially associates with VDR:RXRA heterodimers. Interacts with NCOR2. Interacts with MAML1. Interacts with NOTCH1 NICD; the interaction involves multimerized NOTCH1 NICD. Forms a complex with NOTCH1 NICD and MAML1; the association is dissociated by RBPJ. Associates with positive transcription elongation factor b (P-TEFb). Component of the SNARP complex which consists at least of SNIP1, SNW1, THRAP3, BCLAF1 and PNN.

The protein resides in the nucleus. Its function is as follows. Involved in pre-mRNA splicing as component of the spliceosome. As a component of the minor spliceosome, involved in the splicing of U12-type introns in pre-mRNAs. Required in the specific splicing of CDKN1A pre-mRNA; the function probably involves the recruitment of U2AF2 to the mRNA. May recruit PPIL1 to the spliceosome. May be involved in cyclin-D1/CCND1 mRNA stability through the SNARP complex which associates with both the 3'end of the CCND1 gene and its mRNA. Involved in transcriptional regulation. Modulates TGF-beta-mediated transcription via association with SMAD proteins, MYOD1-mediated transcription via association with PABPN1, RB1-mediated transcriptional repression, and retinoid-X receptor (RXR)- and vitamin D receptor (VDR)-dependent gene transcription in a cell line-specific manner probably involving coactivators NCOA1 and GRIP1. Is involved in NOTCH1-mediated transcriptional activation. Binds to multimerized forms of Notch intracellular domain (NICD) and is proposed to recruit transcriptional coactivators such as MAML1 to form an intermediate preactivation complex which associates with DNA-bound CBF-1/RBPJ to form a transcriptional activation complex by releasing SNW1 and redundant NOTCH1 NICD. The polypeptide is SNW domain-containing protein 1 (Snw1) (Mus musculus (Mouse)).